Consider the following 1553-residue polypeptide: Dual oxidase 1 (1553 aa).

Positions 1 to 21 are cleaved as a signal peptide; it reads MGFRLALAWTLLVGPWMPMGA. Residues 22 to 596 lie on the Extracellular side of the membrane; that stretch reads RNSISWEVQR…YFKGSGFGFG (575 aa). Residues 26–593 form a peroxidase-like; mediates peroxidase activity region; it reads SWEVQRFDGW…MRDYFKGSGF (568 aa). 4 N-linked (GlcNAc...) asparagine glycosylation sites follow: N94, N342, N354, and N534. A helical transmembrane segment spans residues 597–617; that stretch reads VTIGTLCCFPLVSLLSAWIVA. The Cytoplasmic portion of the chain corresponds to 618 to 1046; sequence QLRRRNFKRL…KRFVENYRRH (429 aa). EF-hand domains are found at residues 815–850, 851–886, and 895–930; these read PQDM…FMKG, SPEE…FIEI, and QLTE…HDSE. Ca(2+) contacts are provided by D828, D830, N832, Y834, E839, D864, D866, N868, and E875. The interval 956-1250 is interaction with TXNDC11; sequence YISQEKLCPS…GSFALIQLPR (295 aa). A helical membrane pass occupies residues 1047–1067; sequence IGCLAVFYTIAGGLFLERAYY. Residues 1068-1082 lie on the Extracellular side of the membrane; the sequence is YAFAAHHMGITDTTR. A helical transmembrane segment spans residues 1083–1103; it reads VGIILSRGTAASISFMFSYIL. Residues 1089–1271 form the Ferric oxidoreductase domain; the sequence is RGTAASISFM…YVGDKLVSLS (183 aa). Residues 1104–1138 are Cytoplasmic-facing; the sequence is LTMCRNLITFLRETFLNRYVPFDAAVDFHRLIAST. Residues 1139–1159 traverse the membrane as a helical segment; it reads AIILTVLHSAGHVVNVYLFSI. Residues 1160-1190 lie on the Extracellular side of the membrane; that stretch reads SPLSVLSCLFPGLFHDNGSEFPQKYYWWFFQ. The helical transmembrane segment at 1191–1211 threads the bilayer; that stretch reads TVPGLTGVMLLLILAIMYVFA. Residues 1212-1228 are Cytoplasmic-facing; the sequence is SHHFRRCSFRGFWLTHH. The helical transmembrane segment at 1229-1249 threads the bilayer; that stretch reads LYILLYMLLIIHGSFALIQLP. A topological domain (extracellular) is located at residue R1250. A helical membrane pass occupies residues 1251–1271; that stretch reads FHIFFLVPALIYVGDKLVSLS. One can recognise an FAD-binding FR-type domain in the interval 1272 to 1378; that stretch reads RKKVEISVVK…DGPFGEGHQE (107 aa). The Cytoplasmic portion of the chain corresponds to 1272 to 1553; that stretch reads RKKVEISVVK…THFSHHYENF (282 aa).

It in the N-terminal section; belongs to the peroxidase family. In terms of assembly, interacts with TXNDC11, TPO and CYBA. In terms of processing, N-glycosylated. In terms of tissue distribution, specifically expressed in thyroid.

It localises to the apical cell membrane. It carries out the reaction NADH + O2 + H(+) = H2O2 + NAD(+). The catalysed reaction is NADPH + O2 + H(+) = H2O2 + NADP(+). It participates in hormone biosynthesis; thyroid hormone biosynthesis. The NADPH oxidase activity is calcium-dependent. Peroxidase activity is inhibited by aminobenzohydrazide. In terms of biological role, generates hydrogen peroxide which is required for the activity of thyroid peroxidase/TPO and lactoperoxidase/LPO. Plays a role in thyroid hormones synthesis and lactoperoxidase-mediated antimicrobial defense at the surface of mucosa. May have its own peroxidase activity through its N-terminal peroxidase-like domain. This is Dual oxidase 1 (DUOX1) from Sus scrofa (Pig).